Reading from the N-terminus, the 341-residue chain is Anthranilate phosphoribosyltransferase (341 aa).

Residues G81, 84–85 (GD), 91–94 (NVST), 109–117 (KHGNRSVSS), and S121 contribute to the 5-phospho-alpha-D-ribose 1-diphosphate site. G81 lines the anthranilate pocket. S93 serves as a coordination point for Mg(2+). Residue N112 participates in anthranilate binding. R167 contacts anthranilate. Positions 226 and 227 each coordinate Mg(2+).

It belongs to the anthranilate phosphoribosyltransferase family. In terms of assembly, homodimer. The cofactor is Mg(2+).

The catalysed reaction is N-(5-phospho-beta-D-ribosyl)anthranilate + diphosphate = 5-phospho-alpha-D-ribose 1-diphosphate + anthranilate. Its pathway is amino-acid biosynthesis; L-tryptophan biosynthesis; L-tryptophan from chorismate: step 2/5. Functionally, catalyzes the transfer of the phosphoribosyl group of 5-phosphorylribose-1-pyrophosphate (PRPP) to anthranilate to yield N-(5'-phosphoribosyl)-anthranilate (PRA). The sequence is that of Anthranilate phosphoribosyltransferase from Teredinibacter turnerae (strain ATCC 39867 / T7901).